We begin with the raw amino-acid sequence, 417 residues long: Sterile alpha motif domain-containing protein 14 (417 aa).

The tract at residues 36-302 (QLLAKGRRHR…GGPRQETKCS (267 aa)) is disordered. Over residues 40 to 49 (KGRRHRPSRS) the composition is skewed to basic residues. Phosphoserine occurs at positions 84 and 108. Residues 138–153 (SGSPPRSAPSSDSSPS) show a composition bias toward low complexity. Residues 159–173 (PRAEPHSEDDSRDAS) show a composition bias toward basic and acidic residues. Phosphoserine occurs at positions 173 and 179. Composition is skewed to low complexity over residues 244–260 (SGKGSASSGSTTSPTCS) and 276–289 (STLSDDSTPPSSSP). Residue serine 279 is modified to Phosphoserine. Threonine 283 bears the Phosphothreonine mark. Residues 326 to 389 (WTSQQVGQWL…KRKLKELAAA (64 aa)) enclose the SAM domain. Residues 375–416 (DRALVKRKLKELAAAAEKERKAQEKTAKQREKLRRRENDAKK) are a coiled coil. The interval 390–417 (AEKERKAQEKTAKQREKLRRRENDAKKS) is disordered.

The protein is Sterile alpha motif domain-containing protein 14 (Samd14) of Mus musculus (Mouse).